Reading from the N-terminus, the 291-residue chain is Ribosomal RNA small subunit methyltransferase H (291 aa).

S-adenosyl-L-methionine is bound by residues 36 to 38 (GGH), D55, A90, D102, and Q109.

The protein belongs to the methyltransferase superfamily. RsmH family.

It localises to the cytoplasm. It carries out the reaction cytidine(1402) in 16S rRNA + S-adenosyl-L-methionine = N(4)-methylcytidine(1402) in 16S rRNA + S-adenosyl-L-homocysteine + H(+). Its function is as follows. Specifically methylates the N4 position of cytidine in position 1402 (C1402) of 16S rRNA. This Thermosipho africanus (strain TCF52B) protein is Ribosomal RNA small subunit methyltransferase H.